The sequence spans 264 residues: Tritrans,polycis-undecaprenyl-diphosphate synthase (geranylgeranyl-diphosphate specific) (264 aa).

Aspartate 43 is an active-site residue. Mg(2+) is bound at residue aspartate 43. Substrate contacts are provided by residues 44–47 (GNRR), tryptophan 48, histidine 60, and 88–90 (STE). Asparagine 91 functions as the Proton acceptor in the catalytic mechanism. Residues phenylalanine 92, arginine 94, arginine 213, and 219 to 221 (RIS) contribute to the substrate site. Mg(2+) is bound at residue glutamate 232.

The protein belongs to the UPP synthase family. Homodimer. The cofactor is Mg(2+).

It carries out the reaction geranylgeranyl diphosphate + 7 isopentenyl diphosphate = tri-trans,hepta-cis-undecaprenyl diphosphate + 7 diphosphate. In terms of biological role, catalyzes the sequential condensation of isopentenyl diphosphate (IPP) with geranylgeranyl diphosphate (GGPP) to yield (2Z,6Z,10Z,14Z,18Z,22Z,26Z,30E,34E,38E)-undecaprenyl diphosphate (tritrans,heptacis-UPP). It is probably the precursor of glycosyl carrier lipids. In Thermococcus kodakarensis (strain ATCC BAA-918 / JCM 12380 / KOD1) (Pyrococcus kodakaraensis (strain KOD1)), this protein is Tritrans,polycis-undecaprenyl-diphosphate synthase (geranylgeranyl-diphosphate specific).